The chain runs to 119 residues: Large ribosomal subunit protein bL20 (119 aa).

This sequence belongs to the bacterial ribosomal protein bL20 family.

Its function is as follows. Binds directly to 23S ribosomal RNA and is necessary for the in vitro assembly process of the 50S ribosomal subunit. It is not involved in the protein synthesizing functions of that subunit. The polypeptide is Large ribosomal subunit protein bL20 (Jannaschia sp. (strain CCS1)).